We begin with the raw amino-acid sequence, 308 residues long: tRNA pseudouridine synthase B (308 aa).

The active-site Nucleophile is the aspartate 47.

It belongs to the pseudouridine synthase TruB family. Type 1 subfamily.

The enzyme catalyses uridine(55) in tRNA = pseudouridine(55) in tRNA. Functionally, responsible for synthesis of pseudouridine from uracil-55 in the psi GC loop of transfer RNAs. The protein is tRNA pseudouridine synthase B of Rhodospirillum rubrum (strain ATCC 11170 / ATH 1.1.1 / DSM 467 / LMG 4362 / NCIMB 8255 / S1).